We begin with the raw amino-acid sequence, 735 residues long: NAD(P)H-quinone oxidoreductase subunit 5, chloroplastic (735 aa).

Transmembrane regions (helical) follow at residues 9 to 29 (WIIP…LLLF), 40 to 60 (WAFP…DLSI), 89 to 109 (IDSL…FVLI), 125 to 145 (FAYM…CNLI), 147 to 167 (IYIF…FWFT), 184 to 204 (IGDF…GSFE), 219 to 239 (NEVH…GAVA), 258 to 278 (TPIS…FLVA), 280 to 300 (LLPL…IGII), 327 to 347 (LGYM…FHLI), 354 to 374 (ALLF…VGYS), 396 to 416 (IAFL…CFWS), 425 to 445 (WLYS…TAFY), 540 to 560 (LFPM…AIPF), 600 to 620 (FSVS…KPFY), and 714 to 734 (FYLL…YFIL).

Belongs to the complex I subunit 5 family. In terms of assembly, NDH is composed of at least 16 different subunits, 5 of which are encoded in the nucleus.

The protein resides in the plastid. The protein localises to the chloroplast thylakoid membrane. It carries out the reaction a plastoquinone + NADH + (n+1) H(+)(in) = a plastoquinol + NAD(+) + n H(+)(out). The catalysed reaction is a plastoquinone + NADPH + (n+1) H(+)(in) = a plastoquinol + NADP(+) + n H(+)(out). Its function is as follows. NDH shuttles electrons from NAD(P)H:plastoquinone, via FMN and iron-sulfur (Fe-S) centers, to quinones in the photosynthetic chain and possibly in a chloroplast respiratory chain. The immediate electron acceptor for the enzyme in this species is believed to be plastoquinone. Couples the redox reaction to proton translocation, and thus conserves the redox energy in a proton gradient. The protein is NAD(P)H-quinone oxidoreductase subunit 5, chloroplastic (ndhF) of Gossypium hirsutum (Upland cotton).